We begin with the raw amino-acid sequence, 310 residues long: ADP-L-glycero-D-manno-heptose-6-epimerase (310 aa).

Residues 10-11, 31-32, Lys38, Lys53, 75-79, and Asn92 contribute to the NADP(+) site; these read FI, DN, and EGACS. Tyr140 (proton acceptor) is an active-site residue. Lys144 provides a ligand contact to NADP(+). Asn169 contacts substrate. NADP(+) is bound by residues Val170 and Lys178. The Proton acceptor role is filled by Lys178. Residues Ser180, His187, 201–204, and Arg209 each bind substrate; that span reads FEGS. Lys267 carries the N6-acetyllysine modification. Residue Tyr272 participates in substrate binding.

This sequence belongs to the NAD(P)-dependent epimerase/dehydratase family. HldD subfamily. In terms of assembly, homopentamer. The cofactor is NADP(+).

It carries out the reaction ADP-D-glycero-beta-D-manno-heptose = ADP-L-glycero-beta-D-manno-heptose. The protein operates within nucleotide-sugar biosynthesis; ADP-L-glycero-beta-D-manno-heptose biosynthesis; ADP-L-glycero-beta-D-manno-heptose from D-glycero-beta-D-manno-heptose 7-phosphate: step 4/4. Its function is as follows. Catalyzes the interconversion between ADP-D-glycero-beta-D-manno-heptose and ADP-L-glycero-beta-D-manno-heptose via an epimerization at carbon 6 of the heptose. The sequence is that of ADP-L-glycero-D-manno-heptose-6-epimerase from Shigella boydii serotype 18 (strain CDC 3083-94 / BS512).